Here is a 189-residue protein sequence, read N- to C-terminus: MSIILGIDPGSRVTGYGVVRQVGHKLEYLGSGVIRTSIDDLPTRLKRIYAGITEIITQFNPNEFAIEQVFMAKNPDSALKLGQARGTAIVAAVNQNLPVFEYSPRTIKQTVVGTGAAEKSQVQEMVVRLLQLSDKPQVDAADALAIAITHANSIHNSLQIANSIAIKTPDKITALLRTKYRRGRLRLKG.

Residues Asp8, Glu67, and Asp139 contribute to the active site. 3 residues coordinate Mg(2+): Asp8, Glu67, and Asp139.

It belongs to the RuvC family. In terms of assembly, homodimer which binds Holliday junction (HJ) DNA. The HJ becomes 2-fold symmetrical on binding to RuvC with unstacked arms; it has a different conformation from HJ DNA in complex with RuvA. In the full resolvosome a probable DNA-RuvA(4)-RuvB(12)-RuvC(2) complex forms which resolves the HJ. It depends on Mg(2+) as a cofactor.

It is found in the cytoplasm. It carries out the reaction Endonucleolytic cleavage at a junction such as a reciprocal single-stranded crossover between two homologous DNA duplexes (Holliday junction).. The RuvA-RuvB-RuvC complex processes Holliday junction (HJ) DNA during genetic recombination and DNA repair. Endonuclease that resolves HJ intermediates. Cleaves cruciform DNA by making single-stranded nicks across the HJ at symmetrical positions within the homologous arms, yielding a 5'-phosphate and a 3'-hydroxyl group; requires a central core of homology in the junction. The consensus cleavage sequence is 5'-(A/T)TT(C/G)-3'. Cleavage occurs on the 3'-side of the TT dinucleotide at the point of strand exchange. HJ branch migration catalyzed by RuvA-RuvB allows RuvC to scan DNA until it finds its consensus sequence, where it cleaves and resolves the cruciform DNA. This Histophilus somni (strain 129Pt) (Haemophilus somnus) protein is Crossover junction endodeoxyribonuclease RuvC.